A 967-amino-acid chain; its full sequence is Sodium/potassium exporting P-type ATPase 1 (967 aa).

Over Met1–Arg70 the chain is Cytoplasmic. The helical transmembrane segment at Gln71–Lys91 threads the bilayer. Position 92 (Asp92) is a topological domain, extracellular. A helical transmembrane segment spans residues Tyr93 to Gln113. The Cytoplasmic portion of the chain corresponds to Glu114–Leu254. A helical membrane pass occupies residues Asn255–Val275. At Asn276–Glu283 the chain is on the extracellular side. Asn279 carries N-linked (GlcNAc...) asparagine glycosylation. A helical membrane pass occupies residues Val284–Ile304. Residues Thr305 to Lys732 are Cytoplasmic-facing. Asp340 serves as the catalytic 4-aspartylphosphate intermediate. The Mg(2+) site is built by Asp340 and Thr342. Thr342, Glu425, Lys478, Arg523, Thr587, Gly588, Asp589, Arg651, and Lys657 together coordinate ATP. Residue Asp676 participates in Mg(2+) binding. Asn679 is a binding site for ATP. The chain crosses the membrane as a helical span at residues Phe733–Ala753. At Phe754–Asp812 the chain is on the extracellular side. The helical transmembrane segment at Ile813–Tyr833 threads the bilayer. At Pro834 to Lys900 the chain is on the cytoplasmic side. The chain crosses the membrane as a helical span at residues Val901–Thr921. The Extracellular portion of the chain corresponds to Leu922 to Gly931. The chain crosses the membrane as a helical span at residues Ile932–Phe952. Residues Tyr953 to Met967 are Cytoplasmic-facing.

It belongs to the cation transport ATPase (P-type) (TC 3.A.3) family. Type IID subfamily. Requires Mg(2+) as cofactor. The active site is phosphorylated in presence of sodium or potassium and in conditions of higher pH. Not phosphorylated in presence of calcium ions.

The protein localises to the cell membrane. It carries out the reaction Na(+)(in) + ATP + H2O = Na(+)(out) + ADP + phosphate + H(+). It catalyses the reaction K(+)(in) + ATP + H2O = K(+)(out) + ADP + phosphate + H(+). Catalyzes the hydrolysis of ATP coupled with the export of sodium and potassium from the cell. May pump potassium inefficiently. May transport other cations such as lithium. Sodium/potassium efflux ATPases are involved in salt tolerance and maintaining the membrane potential across the plasma membrane in high salinity (Na+) or alkaline (K+) environments. The chain is Sodium/potassium exporting P-type ATPase 1 from Physcomitrium patens (Spreading-leaved earth moss).